Consider the following 178-residue polypeptide: Peptide methionine sulfoxide reductase MsrA (178 aa).

Cys-12 is a catalytic residue.

It belongs to the MsrA Met sulfoxide reductase family.

It catalyses the reaction L-methionyl-[protein] + [thioredoxin]-disulfide + H2O = L-methionyl-(S)-S-oxide-[protein] + [thioredoxin]-dithiol. It carries out the reaction [thioredoxin]-disulfide + L-methionine + H2O = L-methionine (S)-S-oxide + [thioredoxin]-dithiol. Functionally, has an important function as a repair enzyme for proteins that have been inactivated by oxidation. Catalyzes the reversible oxidation-reduction of methionine sulfoxide in proteins to methionine. This chain is Peptide methionine sulfoxide reductase MsrA, found in Erwinia tasmaniensis (strain DSM 17950 / CFBP 7177 / CIP 109463 / NCPPB 4357 / Et1/99).